The following is a 464-amino-acid chain: NADH dehydrogenase [ubiquinone] flavoprotein 1, mitochondrial (464 aa).

The N-terminal 20 residues, 1–20, are a transit peptide targeting the mitochondrion; it reads MLAARRLLGWSLPARVSVRF. At Lys-81 the chain carries N6-acetyllysine; alternate. Lys-81 is modified (N6-succinyllysine; alternate). 87-96 contributes to the NADH binding site; sequence GRGGAGFPTG. Residue Lys-104 is modified to N6-acetyllysine. Position 199 to 247 (199 to 247) interacts with FMN; that stretch reads RGAGAYICGEETALIESIEGKQGKPRLKPPFPADVGVFGCPTTVANVET. Position 257 is an omega-N-methylarginine (Arg-257). At Lys-375 the chain carries N6-acetyllysine. [4Fe-4S] cluster contacts are provided by Cys-379, Cys-382, Cys-385, and Cys-425.

It belongs to the complex I 51 kDa subunit family. As to quaternary structure, core subunit of respiratory chain NADH dehydrogenase (Complex I) which is composed of 45 different subunits. This is a component of the flavoprotein-sulfur (FP) fragment of the enzyme. Interacts with RAB5IF. FMN is required as a cofactor. Requires [4Fe-4S] cluster as cofactor.

The protein resides in the mitochondrion inner membrane. It catalyses the reaction a ubiquinone + NADH + 5 H(+)(in) = a ubiquinol + NAD(+) + 4 H(+)(out). Its function is as follows. Core subunit of the mitochondrial membrane respiratory chain NADH dehydrogenase (Complex I) which catalyzes electron transfer from NADH through the respiratory chain, using ubiquinone as an electron acceptor. Part of the peripheral arm of the enzyme, where the electrons from NADH are accepted by flavin mononucleotide (FMN) and then passed along a chain of iron-sulfur clusters by electron tunnelling to the final acceptor ubiquinone. Contains FMN, which is the initial electron acceptor as well as one iron-sulfur cluster. This is NADH dehydrogenase [ubiquinone] flavoprotein 1, mitochondrial from Pongo pygmaeus (Bornean orangutan).